Reading from the N-terminus, the 245-residue chain is 1-(5-phosphoribosyl)-5-[(5-phosphoribosylamino)methylideneamino] imidazole-4-carboxamide isomerase (245 aa).

The active-site Proton acceptor is D7. Catalysis depends on D129, which acts as the Proton donor.

This sequence belongs to the HisA/HisF family.

Its subcellular location is the cytoplasm. It catalyses the reaction 1-(5-phospho-beta-D-ribosyl)-5-[(5-phospho-beta-D-ribosylamino)methylideneamino]imidazole-4-carboxamide = 5-[(5-phospho-1-deoxy-D-ribulos-1-ylimino)methylamino]-1-(5-phospho-beta-D-ribosyl)imidazole-4-carboxamide. It functions in the pathway amino-acid biosynthesis; L-histidine biosynthesis; L-histidine from 5-phospho-alpha-D-ribose 1-diphosphate: step 4/9. The polypeptide is 1-(5-phosphoribosyl)-5-[(5-phosphoribosylamino)methylideneamino] imidazole-4-carboxamide isomerase (Edwardsiella ictaluri (strain 93-146)).